We begin with the raw amino-acid sequence, 261 residues long: Thiamine thiazole synthase (261 aa).

NAD(+)-binding positions include serine 40, 59–60, glycine 67, valine 133, and 159–161; these read ER and HID. Residues aspartate 161 and histidine 176 each coordinate Fe cation. NAD(+) contacts are provided by serine 179 and methionine 226. Arginine 236 is a binding site for glycine.

This sequence belongs to the THI4 family. As to quaternary structure, homooctamer; tetramer of dimers. Fe(2+) serves as cofactor.

It catalyses the reaction hydrogen sulfide + glycine + NAD(+) = ADP-5-ethyl-4-methylthiazole-2-carboxylate + nicotinamide + 3 H2O + H(+). Its pathway is cofactor biosynthesis; thiamine diphosphate biosynthesis. Its function is as follows. Involved in the biosynthesis of the thiazole moiety of thiamine. Catalyzes the conversion of NAD and glycine to adenosine diphosphate 5-(2-hydroxyethyl)-4-methylthiazole-2-carboxylate (ADT), an adenylated thiazole intermediate, using free sulfide as a source of sulfur. This chain is Thiamine thiazole synthase, found in Methanococcus maripaludis (strain C5 / ATCC BAA-1333).